We begin with the raw amino-acid sequence, 619 residues long: Chaperone protein HscA homolog (619 aa).

Belongs to the heat shock protein 70 family.

Its function is as follows. Chaperone involved in the maturation of iron-sulfur cluster-containing proteins. Has a low intrinsic ATPase activity which is markedly stimulated by HscB. This chain is Chaperone protein HscA homolog, found in Haemophilus influenzae (strain PittEE).